The primary structure comprises 118 residues: Cycloviolacin-O11 (118 aa).

The signal sequence occupies residues 1–22 (MEMKNMVVGLFLIAAFALPALA). Positions 23–84 (TSFEKDFITH…THSNSINALG (62 aa)) are excised as a propeptide. A cross-link (cyclopeptide (Gly-Asn)) is located at residues 85 to 115 (GTLPCGESCVWIPCISAVVGCSCKSKVCYKN). 3 disulfides stabilise this stretch: cysteine 89/cysteine 105, cysteine 93/cysteine 107, and cysteine 98/cysteine 112. The propeptide occupies 116–118 (SLA).

Post-translationally, cycloviolacin-O11 is a cyclic peptide. Expressed in leaves, petals and petioles but not in roots and runners (at protein level).

In terms of biological role, probably participates in a plant defense mechanism. The sequence is that of Cycloviolacin-O11 (Voc2) from Viola odorata (Sweet violet).